Reading from the N-terminus, the 533-residue chain is Na(+)/H(+) antiporter NhaB (533 aa).

The next 11 membrane-spanning stretches (helical) occupy residues 10–30, 67–87, 96–116, 131–165, 209–229, 247–267, 310–330, 355–375, 396–416, 454–474, and 481–501; these read IGNFLGNSPKWYKIAILSFLI, PGGLLAIQAVAIGMTSASQVL, VLLLLVFMVAGIYFMKQLLLF, VSLMFCLASAFLSAFLDALTVIAVIITVAVGFYSI, LLMHAGVGTALGGVCTMVGEP, IRMSPVTVPVLFAGILTCFLV, AFVGVWLIAGLALHLASVGLI, EEALPFTALLAVFFAVVAVII, LVIFYIANGLLSMVSDNVFVG, ATPNGQAAFLFLLTSALAPLI, and MVWMALPYTIVLSIVGVMAIE.

It belongs to the NhaB Na(+)/H(+) (TC 2.A.34) antiporter family.

The protein resides in the cell inner membrane. The catalysed reaction is 2 Na(+)(in) + 3 H(+)(out) = 2 Na(+)(out) + 3 H(+)(in). Its function is as follows. Na(+)/H(+) antiporter that extrudes sodium in exchange for external protons. The sequence is that of Na(+)/H(+) antiporter NhaB from Shewanella sp. (strain MR-4).